Reading from the N-terminus, the 421-residue chain is Testin (421 aa).

A PET domain is found at 92 to 199 (MILTNPVAAK…GDVKLPREMD (108 aa)). The tract at residues 134–164 (KQPVAGSEGAQYRKKQLAKQLPAHDQDPSKC) is disordered. Residues 155-164 (PAHDQDPSKC) are compositionally biased toward basic and acidic residues. LIM zinc-binding domains lie at 234-297 (YSCY…CDSE), 299-359 (PRCA…NHAV), and 362-421 (QGCH…KMMS).

The protein belongs to the prickle / espinas / testin family. Interacts via LIM domain 1 with ZYX. Interacts (via LIM domain 3) with ENAH and VASP. Interacts with ALKBH4, talin, actin, alpha-actinin, GRIP1 and PXN. Interacts (via LIM domain 2) with ACTL7A (via N-terminus). Heterodimer with ACTL7A; the heterodimer interacts with ENAH to form a heterotrimer.

It localises to the cytoplasm. The protein localises to the cell junction. The protein resides in the focal adhesion. In terms of biological role, scaffold protein that may play a role in cell adhesion, cell spreading and in the reorganization of the actin cytoskeleton. Plays a role in the regulation of cell proliferation. May act as a tumor suppressor. The sequence is that of Testin (TES) from Rhinolophus ferrumequinum (Greater horseshoe bat).